Reading from the N-terminus, the 599-residue chain is MNLMMFDYRRSHTCGQLRKEKVNSQVTLSGWVNRRRDHGGLIFIDLRDRFGLTQLVFDPIKSPTAHLAAEKLRSEWVISVKGTVIPRQEGMTNPKLPTGEIEIMVHEMDILSKSKTPPFSVSDDLIEVNEELRLKYRYLDIRRGDVAKKLITRHQAMLAVRNYLNNQGFLEISTPILGKSTPEGARDYLVPSRVYPGNFYALPQSPQIFKQLLMISGMDRYFQIAQCFRDEDLRADRQPEFTQIDMEMSFGTPEDLMNIVEDLIKTVFKTCSNIDVPTPFKRLSHAICMEEYGCDRPDLRFGMKLHNLNHLAAQTTFSVFLDQIRENGLVKGFCIKGGADFSRKTIDEYTEFVGRLGVKGLAWIKRQENGLNSSIVKFFPESIHQQLIEEMEMEVGDIIFMIANTPSKTNQALDHLRRKIARDRNLVDPHHYEFLWVTDFPLFSWNEEEKRLQSEHHPFTSPHLEDLHLMETNPLKMRSSGYDIVLNGYEIGGGSQRIHNSDLQQKIFERLKFSPEELETKFGFFLEALNYGTPPHLGIALGLDRIIMILTQTENIRDVIAFPKTQKASDLMIECPSPVANEQLKELEIRVPDSQFSWT.

L-aspartate is bound at residue Glu-183. The aspartate stretch occupies residues 207 to 210 (QIFK). Arg-229 lines the L-aspartate pocket. ATP contacts are provided by residues 229–231 (RDE) and Gln-238. Residue His-456 coordinates L-aspartate. ATP is bound at residue Glu-490. Arg-497 is a binding site for L-aspartate. 542-545 (GLDR) contributes to the ATP binding site.

Belongs to the class-II aminoacyl-tRNA synthetase family. Type 1 subfamily. Homodimer.

It localises to the cytoplasm. The catalysed reaction is tRNA(Asx) + L-aspartate + ATP = L-aspartyl-tRNA(Asx) + AMP + diphosphate. Its function is as follows. Aspartyl-tRNA synthetase with relaxed tRNA specificity since it is able to aspartylate not only its cognate tRNA(Asp) but also tRNA(Asn). Reaction proceeds in two steps: L-aspartate is first activated by ATP to form Asp-AMP and then transferred to the acceptor end of tRNA(Asp/Asn). This chain is Aspartate--tRNA(Asp/Asn) ligase, found in Protochlamydia amoebophila (strain UWE25).